We begin with the raw amino-acid sequence, 457 residues long: tRNA modification GTPase MnmE (457 aa).

Arg-25, Glu-87, and Arg-126 together coordinate (6S)-5-formyl-5,6,7,8-tetrahydrofolate. The region spanning 223–377 (GISTAIIGRP…IEERINNLFF (155 aa)) is the TrmE-type G domain. Residue Asn-233 participates in K(+) binding. GTP is bound by residues 233–238 (NVGKSS), 252–258 (TDIAGTT), and 277–280 (DTAG). Ser-237 is a Mg(2+) binding site. Residues Thr-252, Ile-254, and Thr-257 each coordinate K(+). Mg(2+) is bound at residue Thr-258. Lys-457 serves as a coordination point for (6S)-5-formyl-5,6,7,8-tetrahydrofolate.

It belongs to the TRAFAC class TrmE-Era-EngA-EngB-Septin-like GTPase superfamily. TrmE GTPase family. Homodimer. Heterotetramer of two MnmE and two MnmG subunits. The cofactor is K(+).

Its subcellular location is the cytoplasm. Functionally, exhibits a very high intrinsic GTPase hydrolysis rate. Involved in the addition of a carboxymethylaminomethyl (cmnm) group at the wobble position (U34) of certain tRNAs, forming tRNA-cmnm(5)s(2)U34. This is tRNA modification GTPase MnmE from Streptococcus pneumoniae serotype 4 (strain ATCC BAA-334 / TIGR4).